The following is a 187-amino-acid chain: Putative zinc finger protein 833 (187 aa).

6 C2H2-type zinc fingers span residues 10–32 (YKCK…ERTH), 38–60 (YECN…ARIH), 66–88 (YICK…ENTH), 94–116 (CECK…ERIH), 122–144 (YKCK…KSTH), and 150–172 (YECK…EGVH).

The chain is Putative zinc finger protein 833 (ZNF833P) from Homo sapiens (Human).